The sequence spans 424 residues: Fasciclin-like arabinogalactan protein 1 (424 aa).

A signal peptide spans 1 to 24 (MAKKMSSLIIIFNILLLLTTQTHA). FAS1 domains lie at 25–170 (HNVT…SRVL) and 184–323 (EMNL…DKVL). N-linked (GlcNAc...) asparagine glycosylation is found at Asn26, Asn128, Asn160, Asn186, and Asn240. Residues 338–393 (APAPAPEDGDVADSPKAAKGKAKGKKKKAAPSPDNDPFGDSDSPAEGPDGEADDAT) form a disordered region. Positions 355 to 366 (AKGKAKGKKKKA) are enriched in basic residues. Residue Asp396 is the site of GPI-anchor amidated aspartate attachment. Residues 397–424 (AGAVRIIGGAKAGLVVSLLCLFASSWLL) constitute a propeptide, removed in mature form.

This sequence belongs to the fasciclin-like AGP family. Preferentially expressed in flowers.

It localises to the secreted. The protein localises to the extracellular space. It is found in the apoplast. The protein resides in the cell membrane. In terms of biological role, may be a cell surface adhesion protein. This is Fasciclin-like arabinogalactan protein 1 (FLA1) from Arabidopsis thaliana (Mouse-ear cress).